Reading from the N-terminus, the 359-residue chain is MILNSSTEDGIKRIQDDCPKAGRHNYIFVMIPTLYSIIFVVGIFGNSLVVIVIYFYMKLKTVASVFLLNLALADLCFLLTLPLWAVYTAMEYRWPFGNYLCKIASASVSFNLYASVFLLTCLSIDRYLAIVHPMKSRLRRTMLVAKVTCIIIWLLAGLASLPAIIHRNVFFIENTNITVCAFHYESQNSTLPIGLGLTKNILGFLFPFLIILTSYTLIWKALKKAYEIQKNKPRNDDIFKIIMAIVLFFFFSWIPHQIFTFLDVLIQLGIIRDCRIADIVDTAMPITICIAYFNNCLNPLFYGFLGKKFKKYFLQLLKYIPPKAKSHSNLSTKMSTLSYRPSDNVSSSTKKPAPCFEVE.

The Extracellular segment spans residues 1–25 (MILNSSTEDGIKRIQDDCPKAGRHN). N-linked (GlcNAc...) asparagine glycosylation is present at Asn4. Residues Gln15 and Asp17 each contribute to the angiotensin II site. 2 disulfide bridges follow: Cys18/Cys274 and Cys101/Cys180. A helical transmembrane segment spans residues 26-55 (YIFVMIPTLYSIIFVVGIFGNSLVVIVIYF). Over 56-61 (YMKLKT) the chain is Cytoplasmic. A helical transmembrane segment spans residues 62–89 (VASVFLLNLALADLCFLLTLPLWAVYTA). The Extracellular segment spans residues 90–98 (MEYRWPFGN). Residues 99–125 (YLCKIASASVSFNLYASVFLLTCLSID) form a helical membrane-spanning segment. The Cytoplasmic segment spans residues 126-141 (RYLAIVHPMKSRLRRT). The helical transmembrane segment at 142–165 (MLVAKVTCIIIWLLAGLASLPAII) threads the bilayer. The Extracellular portion of the chain corresponds to 166–190 (HRNVFFIENTNITVCAFHYESQNST). Arg167 contacts angiotensin II. A glycan (N-linked (GlcNAc...) asparagine) is linked at Asn176. Residues Phe182, His183, and Tyr184 each coordinate angiotensin II. Asn188 carries an N-linked (GlcNAc...) asparagine glycan. Residues 191-216 (LPIGLGLTKNILGFLFPFLIILTSYT) traverse the membrane as a helical segment. Lys199 is a binding site for angiotensin II. Topologically, residues 217 to 239 (LIWKALKKAYEIQKNKPRNDDIF) are cytoplasmic. Residues 240–268 (KIIMAIVLFFFFSWIPHQIFTFLDVLIQL) traverse the membrane as a helical segment. At 269–278 (GIIRDCRIAD) the chain is on the extracellular side. The chain crosses the membrane as a helical span at residues 279 to 304 (IVDTAMPITICIAYFNNCLNPLFYGF). Over 305 to 359 (LGKKFKKYFLQLLKYIPPKAKSHSNLSTKMSTLSYRPSDNVSSSTKKPAPCFEVE) the chain is Cytoplasmic. The span at 335 to 350 (STLSYRPSDNVSSSTK) shows a compositional bias: polar residues. Positions 335-359 (STLSYRPSDNVSSSTKKPAPCFEVE) are disordered. Cys355 carries the S-palmitoyl cysteine lipid modification.

Belongs to the G-protein coupled receptor 1 family. In terms of assembly, interacts with MAS1. Interacts with ARRB1. Interacts with FLNA (via filamin repeat 21); increases PKA-mediated phosphorylation of FLNA. In terms of processing, C-terminal Ser or Thr residues may be phosphorylated.

It localises to the cell membrane. Functionally, receptor for angiotensin II, a vasoconstricting peptide, which acts as a key regulator of blood pressure and sodium retention by the kidney. The activated receptor in turn couples to G-alpha proteins G(q) (GNAQ, GNA11, GNA14 or GNA15) and thus activates phospholipase C and increases the cytosolic Ca(2+) concentrations, which in turn triggers cellular responses such as stimulation of protein kinase C. This chain is Type-1 angiotensin II receptor (AGTR1), found in Pan troglodytes (Chimpanzee).